We begin with the raw amino-acid sequence, 168 residues long: NADH-ubiquinone oxidoreductase chain 6 (168 aa).

A run of 5 helical transmembrane segments spans residues 1-21 (MKMMTIYIISLLLMIGFVAFA), 27-47 (IYGGLSLVVSGGLGCGMVVSL), 50-70 (VFLGLVVFLVYLGGMLVVFGY), 87-107 (VVAFIMLLFVLLLQVGWYFMS), and 143-163 (WALALLGWILFMTIYVVLEVV).

It belongs to the complex I subunit 6 family. Core subunit of respiratory chain NADH dehydrogenase (Complex I) which is composed of 45 different subunits.

The protein resides in the mitochondrion inner membrane. It catalyses the reaction a ubiquinone + NADH + 5 H(+)(in) = a ubiquinol + NAD(+) + 4 H(+)(out). Core subunit of the mitochondrial membrane respiratory chain NADH dehydrogenase (Complex I) which catalyzes electron transfer from NADH through the respiratory chain, using ubiquinone as an electron acceptor. Essential for the catalytic activity and assembly of complex I. The sequence is that of NADH-ubiquinone oxidoreductase chain 6 (MT-ND6) from Didelphis virginiana (North American opossum).